Consider the following 209-residue polypeptide: Superoxide dismutase [Mn/Fe] (209 aa).

The Fe(3+) site is built by histidine 38, histidine 90, aspartate 172, and histidine 176. The Mn(2+) site is built by histidine 38, histidine 90, aspartate 172, and histidine 176.

This sequence belongs to the iron/manganese superoxide dismutase family. It depends on Mn(2+) as a cofactor. Fe(3+) serves as cofactor.

The catalysed reaction is 2 superoxide + 2 H(+) = H2O2 + O2. Functionally, destroys superoxide anion radicals which are normally produced within the cells and which are toxic to biological systems. Catalyzes the dismutation of superoxide anion radicals into O2 and H2O2 by successive reduction and oxidation of the transition metal ion at the active site. The polypeptide is Superoxide dismutase [Mn/Fe] (sodB) (Rickettsia bellii (strain RML369-C)).